A 237-amino-acid polypeptide reads, in one-letter code: Large ribosomal subunit protein uL1 (237 aa).

This sequence belongs to the universal ribosomal protein uL1 family. In terms of assembly, part of the 50S ribosomal subunit.

Functionally, binds directly to 23S rRNA. The L1 stalk is quite mobile in the ribosome, and is involved in E site tRNA release. In terms of biological role, protein L1 is also a translational repressor protein, it controls the translation of the L11 operon by binding to its mRNA. In Thermosynechococcus vestitus (strain NIES-2133 / IAM M-273 / BP-1), this protein is Large ribosomal subunit protein uL1.